Reading from the N-terminus, the 100-residue chain is Integration host factor subunit alpha (100 aa).

The interval 53–72 (FQLRDKPQRPGRNPKTGEEV) is disordered.

This sequence belongs to the bacterial histone-like protein family. Heterodimer of an alpha and a beta chain.

In terms of biological role, this protein is one of the two subunits of integration host factor, a specific DNA-binding protein that functions in genetic recombination as well as in transcriptional and translational control. In Neisseria gonorrhoeae (strain ATCC 700825 / FA 1090), this protein is Integration host factor subunit alpha.